The following is a 383-amino-acid chain: MRGLSQRVKSMKPSATVAVNARALELRRKGVDLVALTAGEPDFDTPEHVKEAGRRALAQGKTKYAPPAGIPELREAVAEKFRRENGLEVTPEETIVTVGGKQALFNLFQAILDPGDEVIVLAPYWVSYPEMVRFAGGVPVEVPTLPEEGFVPDPERVRRAITPRTKALVVNSPNNPTGVVYPEEVLRALAEMALQHDFYLVSDEIYEHLIYEGAHFSPGTLAPEHTITVNGAAKAFAMTGWRIGYACGPKAVIKAMADVSSQSTTSPDTIAQWATLEALTNREASMAFIAMAREAYRKRRDLLLEGLSRIGLEAVRPSGAFYVLMDTSPFAPNEVEAAERLLMAGVAVVPGTEFAAFGHVRLSYATGEENLKKALERFAQALQ.

Residues Gly39, Trp125, and Asn175 each coordinate L-aspartate. Residue Lys234 is modified to N6-(pyridoxal phosphate)lysine. Arg361 is an L-aspartate binding site.

Belongs to the class-I pyridoxal-phosphate-dependent aminotransferase family. Homodimer. Pyridoxal 5'-phosphate is required as a cofactor.

Its subcellular location is the cytoplasm. It carries out the reaction L-aspartate + 2-oxoglutarate = oxaloacetate + L-glutamate. The catalysed reaction is L-arogenate + oxaloacetate = prephenate + L-aspartate. In terms of biological role, catalyzes the reversible conversion of aspartate and 2-oxoglutarate to glutamate and oxaloacetate. Can also transaminate prephenate in the presence of aspartate. The protein is Probable aspartate/prephenate aminotransferase (aspC) of Thermus aquaticus.